Here is a 671-residue protein sequence, read N- to C-terminus: UvrABC system protein B (671 aa).

The 388-residue stretch at 25 to 412 folds into the Helicase ATP-binding domain; sequence EGIDAGLAHQ…AGRVVEQVVR (388 aa). Residue 38-45 participates in ATP binding; sequence GVTGSGKT. Residues 91-114 carry the Beta-hairpin motif; that stretch reads YYDYYQPEAYVPSSDTFIEKDASI. The Helicase C-terminal domain maps to 429–595; it reads QVDDLLSEIH…GVFKDVADIM (167 aa). The disordered stretch occupies residues 600–624; that stretch reads VPGSRSKKRKGMAKAAEENARYENE. Residues 614–624 show a composition bias toward basic and acidic residues; the sequence is AAEENARYENE. A UVR domain is found at 632-667; it reads NKRIRQLEEKMYQLARDLEFEAAAQMRDEIGKLRER.

It belongs to the UvrB family. In terms of assembly, forms a heterotetramer with UvrA during the search for lesions. Interacts with UvrC in an incision complex.

Its subcellular location is the cytoplasm. In terms of biological role, the UvrABC repair system catalyzes the recognition and processing of DNA lesions. A damage recognition complex composed of 2 UvrA and 2 UvrB subunits scans DNA for abnormalities. Upon binding of the UvrA(2)B(2) complex to a putative damaged site, the DNA wraps around one UvrB monomer. DNA wrap is dependent on ATP binding by UvrB and probably causes local melting of the DNA helix, facilitating insertion of UvrB beta-hairpin between the DNA strands. Then UvrB probes one DNA strand for the presence of a lesion. If a lesion is found the UvrA subunits dissociate and the UvrB-DNA preincision complex is formed. This complex is subsequently bound by UvrC and the second UvrB is released. If no lesion is found, the DNA wraps around the other UvrB subunit that will check the other stand for damage. The sequence is that of UvrABC system protein B from Pseudomonas savastanoi pv. phaseolicola (strain 1448A / Race 6) (Pseudomonas syringae pv. phaseolicola (strain 1448A / Race 6)).